The chain runs to 74 residues: MTQELSFEEAIQRLEQVVRELESGDLPLERGLELFQEGVALARHCTALLDRAEARIEQLLERDGGVETLPFEPE.

It belongs to the XseB family. In terms of assembly, heterooligomer composed of large and small subunits.

The protein resides in the cytoplasm. It catalyses the reaction Exonucleolytic cleavage in either 5'- to 3'- or 3'- to 5'-direction to yield nucleoside 5'-phosphates.. Its function is as follows. Bidirectionally degrades single-stranded DNA into large acid-insoluble oligonucleotides, which are then degraded further into small acid-soluble oligonucleotides. The protein is Exodeoxyribonuclease 7 small subunit of Symbiobacterium thermophilum (strain DSM 24528 / JCM 14929 / IAM 14863 / T).